We begin with the raw amino-acid sequence, 489 residues long: Betaine aldehyde dehydrogenase (489 aa).

The K(+) site is built by Thr-26 and Asp-93. An NAD(+)-binding site is contributed by 150–152 (GAW). Lys-162 (charge relay system) is an active-site residue. 176 to 179 (KPSE) provides a ligand contact to NAD(+). Val-180 is a binding site for K(+). 229–232 (GVET) contacts NAD(+). Leu-245 provides a ligand contact to K(+). Glu-251 acts as the Proton acceptor in catalysis. Residues Gly-253, Cys-285, and Glu-386 each contribute to the NAD(+) site. The Nucleophile role is filled by Cys-285. Cys-285 carries the post-translational modification Cysteine sulfenic acid (-SOH). Residues Lys-456 and Gly-459 each contribute to the K(+) site. The active-site Charge relay system is the Glu-463.

It belongs to the aldehyde dehydrogenase family. In terms of assembly, dimer of dimers. K(+) is required as a cofactor.

The catalysed reaction is betaine aldehyde + NAD(+) + H2O = glycine betaine + NADH + 2 H(+). It participates in amine and polyamine biosynthesis; betaine biosynthesis via choline pathway; betaine from betaine aldehyde: step 1/1. In terms of biological role, involved in the biosynthesis of the osmoprotectant glycine betaine. Catalyzes the irreversible oxidation of betaine aldehyde to the corresponding acid. The protein is Betaine aldehyde dehydrogenase of Paraburkholderia phymatum (strain DSM 17167 / CIP 108236 / LMG 21445 / STM815) (Burkholderia phymatum).